The primary structure comprises 189 residues: HGPRTase-like protein 2 (189 aa).

The protein belongs to the purine/pyrimidine phosphoribosyltransferase family. Archaeal HPRT subfamily.

Its function is as follows. May catalyze a purine salvage reaction, the substrate is unknown. The polypeptide is HGPRTase-like protein 2 (Haloarcula marismortui (strain ATCC 43049 / DSM 3752 / JCM 8966 / VKM B-1809) (Halobacterium marismortui)).